The chain runs to 297 residues: Bifunctional protein FolD 1 (297 aa).

Residues 164–166 and Thr230 each bind NADP(+); that span reads GRS.

The protein belongs to the tetrahydrofolate dehydrogenase/cyclohydrolase family. Homodimer.

The catalysed reaction is (6R)-5,10-methylene-5,6,7,8-tetrahydrofolate + NADP(+) = (6R)-5,10-methenyltetrahydrofolate + NADPH. It carries out the reaction (6R)-5,10-methenyltetrahydrofolate + H2O = (6R)-10-formyltetrahydrofolate + H(+). It participates in one-carbon metabolism; tetrahydrofolate interconversion. In terms of biological role, catalyzes the oxidation of 5,10-methylenetetrahydrofolate to 5,10-methenyltetrahydrofolate and then the hydrolysis of 5,10-methenyltetrahydrofolate to 10-formyltetrahydrofolate. The sequence is that of Bifunctional protein FolD 1 from Rhodococcus jostii (strain RHA1).